We begin with the raw amino-acid sequence, 269 residues long: Eukaryotic translation initiation factor 3 subunit G-1 (269 aa).

The RRM domain maps to 188–266 (AAIRISNLSE…LILSVEWSKP (79 aa)).

Belongs to the eIF-3 subunit G family. In terms of assembly, component of the eukaryotic translation initiation factor 3 (eIF-3) complex. The eIF-3 complex interacts with pix.

Its subcellular location is the cytoplasm. In terms of biological role, RNA-binding component of the eukaryotic translation initiation factor 3 (eIF-3) complex, which is involved in protein synthesis of a specialized repertoire of mRNAs and, together with other initiation factors, stimulates binding of mRNA and methionyl-tRNAi to the 40S ribosome. The eIF-3 complex specifically targets and initiates translation of a subset of mRNAs involved in cell proliferation. This subunit can bind 18S rRNA. This is Eukaryotic translation initiation factor 3 subunit G-1 from Drosophila willistoni (Fruit fly).